The primary structure comprises 30 residues: Sperm protamine P5 (30 aa).

Residues Tyr-1–Gly-30 form a disordered region.

Testis.

It localises to the nucleus. It is found in the chromosome. Its function is as follows. Protamines substitute for histones in the chromatin of sperm during the haploid phase of spermatogenesis. They compact sperm DNA into a highly condensed, stable and inactive complex. This Octopus vulgaris (Common octopus) protein is Sperm protamine P5.